Here is a 290-residue protein sequence, read N- to C-terminus: tRNA (adenine(58)-N(1))-methyltransferase catalytic subunit TRMT61A (290 aa).

Serine 2 is subject to N-acetylserine. Substrate stretches follow at residues 20 to 22 (LGH), 35 to 42 (QTQTRHGV), 64 to 65 (GW), 85 to 89 (QILYS), and 110 to 117 (SGTGSGSV). Residues leucine 87, 114 to 116 (SGS), glutamate 135, arginine 140, 163 to 164 (DV), and aspartate 181 contribute to the S-adenosyl-L-methionine site. Substrate regions lie at residues 180-183 (LDIP) and 205-212 (SFSPCIEQ). Residue threonine 279 coordinates substrate.

The protein belongs to the class I-like SAM-binding methyltransferase superfamily. TRM61 family. As to quaternary structure, heterotetramer; composed of two copies of TRMT6 and two copies of TRMT61A.

The protein resides in the nucleus. The catalysed reaction is adenosine(58) in tRNA + S-adenosyl-L-methionine = N(1)-methyladenosine(58) in tRNA + S-adenosyl-L-homocysteine + H(+). It catalyses the reaction an adenosine in mRNA + S-adenosyl-L-methionine = an N(1)-methyladenosine in mRNA + S-adenosyl-L-homocysteine + H(+). In terms of biological role, catalytic subunit of tRNA (adenine-N(1)-)-methyltransferase, which catalyzes the formation of N(1)-methyladenine at position 58 (m1A58) in initiator methionyl-tRNA. Catalytic subunit of mRNA N(1)-methyltransferase complex, which mediates methylation of adenosine residues at the N(1) position of a small subset of mRNAs: N(1) methylation takes place in tRNA T-loop-like structures of mRNAs and is only present at low stoichiometries. The polypeptide is tRNA (adenine(58)-N(1))-methyltransferase catalytic subunit TRMT61A (Trmt61a) (Rattus norvegicus (Rat)).